The primary structure comprises 173 residues: ATP synthase subunit delta (173 aa).

Belongs to the ATPase delta chain family. As to quaternary structure, F-type ATPases have 2 components, F(1) - the catalytic core - and F(0) - the membrane proton channel. F(1) has five subunits: alpha(3), beta(3), gamma(1), delta(1), epsilon(1). F(0) has three main subunits: a(1), b(2) and c(10-14). The alpha and beta chains form an alternating ring which encloses part of the gamma chain. F(1) is attached to F(0) by a central stalk formed by the gamma and epsilon chains, while a peripheral stalk is formed by the delta and b chains.

The protein resides in the cell inner membrane. F(1)F(0) ATP synthase produces ATP from ADP in the presence of a proton or sodium gradient. F-type ATPases consist of two structural domains, F(1) containing the extramembraneous catalytic core and F(0) containing the membrane proton channel, linked together by a central stalk and a peripheral stalk. During catalysis, ATP synthesis in the catalytic domain of F(1) is coupled via a rotary mechanism of the central stalk subunits to proton translocation. In terms of biological role, this protein is part of the stalk that links CF(0) to CF(1). It either transmits conformational changes from CF(0) to CF(1) or is implicated in proton conduction. The protein is ATP synthase subunit delta of Campylobacter jejuni subsp. jejuni serotype O:2 (strain ATCC 700819 / NCTC 11168).